We begin with the raw amino-acid sequence, 1913 residues long: MIFKSFLLGNLGSLYIKIINSVVVVGLYYGFLTTFSIGPSYFFLLRARIMEEGTEREVSATTGFITGQLMMFISIYYAPLHLALGRPHTITVLVIPYLLFHFFSNNQKQFFDYGSTTRNSMRNLSIQCVFLTNLIFQLFNHLMLPSSTLARLVNIYMFRCNNKMLFVTSSFVGWLIGHILFMKWVGLVVSWIRQNHSIRSNVLIRSNKYLGLKLKSAIAQILSIIFFIACVNYLARLPDPSVTKKLNETSKTETEEEESKESQKSKESEEERDVEKETTSETKETKQEQEGSTEQDPSPYWEEKEDPDKIDETEEIRVNGKEKKKDETEEIRVNGKEKKKDEFRFHFKETDYKRSPGYENSYLDGYQDNWDLQSEEEEEEESTLGFEKPLVTCLFDYKRWNRPFRYIKNKTFENAIRDEMSQYFFYTCLNNGKKKISFTYPPSLATFSEIIERKMSLYTTKKLTDDDLYSHWVSNNEEKKNNLSNELINRIKVLDKGSLAPDVLEKRTRLCDDENEQECLPKKYDPLLNGSYRGRIKKLESESTRNDSIISAKGSLEKIWKNKIHSLITNDSREFEHQMDPFDGESLSAYMTHSLTSISKLSLELVSIFHFEDLALLTEQKRIDFENQTKRLKFLFDVITADANNQTIENKFIEIEKIDKKIPRWVYKLISEEDYLAQQEQQEEENEEEAPLDFGIRSRKGRRVVIYTDKNQNRDQDPNPNTDNTTTENDNSDTGEEIALIRYAQQSDFSRDLINGSIRAKRRKIVLWEMLQANAHSPLFLDQVAKMVSFDLFDDLRETMNLIFRNWITKEPELQILDSEEKEDREKLIKIREEDERIIISETWDNVMCAQAIRGCMLVTHSFIRKYIILPLLIIAKNIGRILLFQLSEWDEDFKDWNREMHVKCTYNGVQLSETEFPQNWLKDGIQIKILFPFSLKPWRESKATPSTGGLMKEKKRKNDDFCFLTVWGMEAELPFGPPRNRPSFFKPIFEELDTNIRKVENQSFVFKEKTKDFLKKKTGWVTKIVLLKNKIRNFFTKVNPNLLFGLKKVYEPSENQKDSIISNKITHESTVQIPSSNWTNYSPIEKKMKDLSDRTITTRSQIERITKDKQKGFLTSDINIRSNETSCNAKRTELQKDILRIAKKRSIRFIRKLHSFVKSFIERIYLDIFLCTINIPRINLQLFFESIKKILNKSISNDERNKEKIDETNQNTIHFISTIRNSFSNSNLNNKSKIYWDFSLLSQAYVLYKLSQTQVIKRYQLKSVLQYHRAYPFLKDRIKDLFGTPRIVHAKSRPKKLPISRINAWKNWLRGHYQYNLSQTRWSELVPKKWREKFNQRTIKNKYSRKLNSSEKEKNQQAHYAKEISYVVDSLSSQKGKLKKDYRYDLLSHKYINSNYEDREYSDISRLSLQINGDREIPYDYNRQESDYVLVGLPISDYLGEEYFIGVDKNSDRKYFDRRILRFDLRKDLNIKTQINRDTETNMNKNGTNNYPAIGKKNPFSLPIHQEINSSKKKKQKFFDWMGMREEILYRPISNLEPWFFPEFVLRYDAYKSKPRIISIKSLLLDSQKDERNEIISKTKNINKKNQKKDLSNQKKHLEVENQEKEDFRQVDLRPNPTNQRDPIVSDTRNQQKDIEEDSVGSGVKKRRKKKKFKSKKEAELDFFLKKYLLFQLRWDELLNKKMMTNIKVYCLLLRLKNLKEIAISSIERGEMCLDLMLMQKDLSLRELIKKGIFIIEPIRLSRKWDGKLIMYQTIGISLVAENKDPINIRCRKKGYADENSFNKSVRQQEKMLVDRDENDYDLLVPENILSPRRRRELRILICFNSGNESAVDGNSVFYNNKNVESCRQFLDEDKHLDTDAKKFMKLKFFLWPNYRLEDLACMNRYWFDTTNGSRFSMLRIHMYPRFLISWW.

5 helical membrane-spanning segments follow: residues 18 to 38 (IINSVVVVGLYYGFLTTFSIG), 64 to 84 (FITGQLMMFISIYYAPLHLAL), 124 to 144 (LSIQCVFLTNLIFQLFNHLML), 172 to 192 (VGWLIGHILFMKWVGLVVSWI), and 214 to 234 (LKSAIAQILSIIFFIACVNYL). 3 disordered regions span residues 245-330 (KLNE…ETEE), 707-734 (YTDKNQNRDQDPNPNTDNTTTENDNSDT), and 1605-1652 (EKED…RKKK). The span at 260-289 (KESQKSKESEEERDVEKETTSETKETKQEQ) shows a compositional bias: basic and acidic residues. Positions 303–314 (EKEDPDKIDETE) are enriched in acidic residues. The span at 315–330 (EIRVNGKEKKKDETEE) shows a compositional bias: basic and acidic residues. Residues 718–729 (PNPNTDNTTTEN) are compositionally biased toward low complexity.

It belongs to the TIC214 family. Part of the Tic complex.

Its subcellular location is the plastid. It is found in the chloroplast inner membrane. Involved in protein precursor import into chloroplasts. May be part of an intermediate translocation complex acting as a protein-conducting channel at the inner envelope. In Acorus calamus var. americanus (American sweet flag), this protein is Protein TIC 214.